The following is a 252-amino-acid chain: MLKLGKVETYIHEKLEREKLHFVLLDPDDVSPELAGELASMSEEVGVDAIMVGGSTGAEGEVLDSVVRAIKESSNLPVILFPGSHGGISKYADAIFFMSLLNSRNPFFITGAQALGAFQVKRYGIEPIPMAYLIIEPGETVGWVGDAKPIPRHKPKIAAAYALAGQYLGMRLVYLEAGSGAPQPVPPEMIGLVKRVIDVPLIVGGGIRTEEQARAAVKAGADIIVTGTAIEKAGSVEKAREKLEELNRGVKG.

Mg(2+)-binding residues include Asp26 and Ser55. Sn-glycerol 1-phosphate contacts are provided by residues 174-180, 205-206, and 227-228; these read YLEAGSG, GG, and GT.

The protein belongs to the GGGP/HepGP synthase family. Group II subfamily. In terms of assembly, homotetramer. Homohexamer. The cofactor is Mg(2+).

Its subcellular location is the cytoplasm. It carries out the reaction sn-glycerol 1-phosphate + (2E,6E,10E)-geranylgeranyl diphosphate = sn-3-O-(geranylgeranyl)glycerol 1-phosphate + diphosphate. It functions in the pathway membrane lipid metabolism; glycerophospholipid metabolism. In terms of biological role, prenyltransferase that catalyzes the transfer of the geranylgeranyl moiety of geranylgeranyl diphosphate (GGPP) to the C3 hydroxyl of sn-glycerol-1-phosphate (G1P). This reaction is the first ether-bond-formation step in the biosynthesis of archaeal membrane lipids. The protein is Geranylgeranylglyceryl phosphate synthase of Thermococcus kodakarensis (strain ATCC BAA-918 / JCM 12380 / KOD1) (Pyrococcus kodakaraensis (strain KOD1)).